Reading from the N-terminus, the 215-residue chain is UPF0502 protein Shew_1617 (215 aa).

Belongs to the UPF0502 family.

This chain is UPF0502 protein Shew_1617, found in Shewanella loihica (strain ATCC BAA-1088 / PV-4).